Here is a 101-residue protein sequence, read N- to C-terminus: Co-chaperonin GroES 1 (101 aa).

It belongs to the GroES chaperonin family. In terms of assembly, heptamer of 7 subunits arranged in a ring. Interacts with the chaperonin GroEL.

The protein resides in the cytoplasm. In terms of biological role, together with the chaperonin GroEL, plays an essential role in assisting protein folding. The GroEL-GroES system forms a nano-cage that allows encapsulation of the non-native substrate proteins and provides a physical environment optimized to promote and accelerate protein folding. GroES binds to the apical surface of the GroEL ring, thereby capping the opening of the GroEL channel. The chain is Co-chaperonin GroES 1 from Rhodopirellula baltica (strain DSM 10527 / NCIMB 13988 / SH1).